The chain runs to 426 residues: Serine--tRNA ligase (426 aa).

T233–E235 serves as a coordination point for L-serine. R264–E266 contacts ATP. E287 contributes to the L-serine binding site. E351–S354 contacts ATP. S387 contributes to the L-serine binding site.

This sequence belongs to the class-II aminoacyl-tRNA synthetase family. Type-1 seryl-tRNA synthetase subfamily. As to quaternary structure, homodimer. The tRNA molecule binds across the dimer.

The protein resides in the cytoplasm. It carries out the reaction tRNA(Ser) + L-serine + ATP = L-seryl-tRNA(Ser) + AMP + diphosphate + H(+). The catalysed reaction is tRNA(Sec) + L-serine + ATP = L-seryl-tRNA(Sec) + AMP + diphosphate + H(+). Its pathway is aminoacyl-tRNA biosynthesis; selenocysteinyl-tRNA(Sec) biosynthesis; L-seryl-tRNA(Sec) from L-serine and tRNA(Sec): step 1/1. Catalyzes the attachment of serine to tRNA(Ser). Is also able to aminoacylate tRNA(Sec) with serine, to form the misacylated tRNA L-seryl-tRNA(Sec), which will be further converted into selenocysteinyl-tRNA(Sec). This chain is Serine--tRNA ligase, found in Xylella fastidiosa (strain M12).